The following is a 51-amino-acid chain: Ribosomal protein eL39-like 2 (51 aa).

Belongs to the eukaryotic ribosomal protein eL39 family. As to quaternary structure, component of a male germ cell-specific 60S large ribosomal subunit (LSU), which contains RPL10L and RPL39L, instead of RPL10 and RPL39 paralogs. The composition of the rest of the complex is similar to classical ribosomes. As to expression, testis specific.

Its subcellular location is the cytoplasm. In terms of biological role, male germ cell-specific component of the ribosome, which is required for the formation of sperm and male fertility. Replaces the RPL39 paralog in the ribosome of male germ cells. The ribosome is a large ribonucleoprotein complex responsible for the synthesis of proteins in the cell. The male germ cell-specific ribosome displays a ribosomal polypeptide exit tunnel of distinct size and charge states compared with the classical ribosome. It is responsible for regulating the biosynthesis and folding of a subset of male germ-cell-specific proteins that are essential for the formation of sperm. This chain is Ribosomal protein eL39-like 2, found in Homo sapiens (Human).